Reading from the N-terminus, the 488-residue chain is Prostaglandin E2 receptor EP4 subtype (488 aa).

The Extracellular portion of the chain corresponds to 1-19; that stretch reads MSIPGVNASFSSTPERLNS. Asn-7 carries N-linked (GlcNAc...) asparagine glycosylation. The chain crosses the membrane as a helical span at residues 20 to 43; the sequence is PVTIPAVMFIFGVVGNLVAIVVLC. At 44-55 the chain is on the cytoplasmic side; sequence KSRKEQKETTFY. The chain crosses the membrane as a helical span at residues 56 to 79; it reads TLVCGLAVTDLLGTLLVSPVTIAT. The Extracellular portion of the chain corresponds to 80 to 96; the sequence is YMKGQWPGDQALCDYST. Cysteines 92 and 170 form a disulfide. A helical transmembrane segment spans residues 97–115; it reads FILLFFGLSGLSIICAMSI. Residues 116–135 are Cytoplasmic-facing; sequence ERYLAINHAYFYSHYVDKRL. Residues 136–160 traverse the membrane as a helical segment; the sequence is AGLTLFAVYASNVLFCALPNMGLGR. At 161–184 the chain is on the extracellular side; that stretch reads SERQYPGTWCFIDWTTNVTAYAAF. A helical transmembrane segment spans residues 185–211; that stretch reads SYMYAGFSSFLILATVLCNVLVCGALL. At 212–270 the chain is on the cytoplasmic side; the sequence is RMLRQFMRRTSLGTEQHHAAAAAAVASVACRGHAAASPALQRLSDFRRRRSFRRIAGAE. A helical transmembrane segment spans residues 271–298; the sequence is IQMVILLIATSLVVLICSIPLVVRVFIN. Residues 299-315 lie on the Extracellular side of the membrane; the sequence is QLYQPSVVKDISRNPDL. A helical membrane pass occupies residues 316–335; it reads QAIRIASVNPILDPWIYILL. The Cytoplasmic segment spans residues 336–488; sequence RKTVLSKAIE…ETLKLSEKCI (153 aa). The disordered stretch occupies residues 358 to 380; the sequence is GRDGSAQHCSESRRTSSAMSGHS. 4 positions are modified to phosphoserine: Ser-377, Ser-380, Ser-382, and Ser-385.

The protein belongs to the G-protein coupled receptor 1 family. In terms of assembly, interacts with FEM1A. In terms of processing, phosphorylation mediates agonist-mediated desensitization by promoting cytoplasmic retention.

It is found in the cell membrane. Functionally, receptor for prostaglandin E2 (PGE2). The activity of this receptor is mediated by G(s) proteins that stimulate adenylate cyclase. Has a relaxing effect on smooth muscle. May play an important role in regulating renal hemodynamics, intestinal epithelial transport, adrenal aldosterone secretion, and uterine function. The chain is Prostaglandin E2 receptor EP4 subtype (Ptger4) from Rattus norvegicus (Rat).